A 199-amino-acid polypeptide reads, in one-letter code: Photosystem I reaction center subunit XI (199 aa).

The next 2 membrane-spanning stretches (helical) occupy residues 108–128 (ITAG…LLVL) and 165–185 (FWLG…TLHL).

Belongs to the PsaL family.

Its subcellular location is the cellular thylakoid membrane. The protein is Photosystem I reaction center subunit XI of Prochlorococcus marinus (strain MIT 9515).